A 390-amino-acid polypeptide reads, in one-letter code: Protein MalY (390 aa).

K233 bears the N6-(pyridoxal phosphate)lysine mark.

It belongs to the class-II pyridoxal-phosphate-dependent aminotransferase family. MalY/PatB cystathionine beta-lyase subfamily. In terms of assembly, homodimer. Interacts with MalT. It depends on pyridoxal 5'-phosphate as a cofactor.

The enzyme catalyses L,L-cystathionine + H2O = L-homocysteine + pyruvate + NH4(+). The catalysed reaction is an S-substituted L-cysteine + H2O = a thiol + pyruvate + NH4(+). Acts as a beta-cystathionase and as a repressor of the maltose regulon. This Escherichia coli (strain K12) protein is Protein MalY (malY).